Reading from the N-terminus, the 216-residue chain is ATP-dependent Clp protease proteolytic subunit (216 aa).

The Nucleophile role is filled by Ser-120. His-145 is an active-site residue.

This sequence belongs to the peptidase S14 family. In terms of assembly, fourteen ClpP subunits assemble into 2 heptameric rings which stack back to back to give a disk-like structure with a central cavity, resembling the structure of eukaryotic proteasomes.

It localises to the cytoplasm. It carries out the reaction Hydrolysis of proteins to small peptides in the presence of ATP and magnesium. alpha-casein is the usual test substrate. In the absence of ATP, only oligopeptides shorter than five residues are hydrolyzed (such as succinyl-Leu-Tyr-|-NHMec, and Leu-Tyr-Leu-|-Tyr-Trp, in which cleavage of the -Tyr-|-Leu- and -Tyr-|-Trp bonds also occurs).. In terms of biological role, cleaves peptides in various proteins in a process that requires ATP hydrolysis. Has a chymotrypsin-like activity. Plays a major role in the degradation of misfolded proteins. The protein is ATP-dependent Clp protease proteolytic subunit of Cupriavidus pinatubonensis (strain JMP 134 / LMG 1197) (Cupriavidus necator (strain JMP 134)).